The primary structure comprises 153 residues: Ribosome maturation factor RimP (153 aa).

The protein belongs to the RimP family.

It localises to the cytoplasm. In terms of biological role, required for maturation of 30S ribosomal subunits. This Clostridioides difficile (strain 630) (Peptoclostridium difficile) protein is Ribosome maturation factor RimP.